Here is a 477-residue protein sequence, read N- to C-terminus: Glycogen synthase (477 aa).

Lys15 contributes to the ADP-alpha-D-glucose binding site.

Belongs to the glycosyltransferase 1 family. Bacterial/plant glycogen synthase subfamily.

The catalysed reaction is [(1-&gt;4)-alpha-D-glucosyl](n) + ADP-alpha-D-glucose = [(1-&gt;4)-alpha-D-glucosyl](n+1) + ADP + H(+). It functions in the pathway glycan biosynthesis; glycogen biosynthesis. In terms of biological role, synthesizes alpha-1,4-glucan chains using ADP-glucose. The chain is Glycogen synthase from Klebsiella pneumoniae subsp. pneumoniae (strain ATCC 700721 / MGH 78578).